We begin with the raw amino-acid sequence, 150 residues long: 3-hydroxyacyl-[acyl-carrier-protein] dehydratase FabZ (150 aa).

Residue H54 is part of the active site.

The protein belongs to the thioester dehydratase family. FabZ subfamily.

It is found in the cytoplasm. The catalysed reaction is a (3R)-hydroxyacyl-[ACP] = a (2E)-enoyl-[ACP] + H2O. Involved in unsaturated fatty acids biosynthesis. Catalyzes the dehydration of short chain beta-hydroxyacyl-ACPs and long chain saturated and unsaturated beta-hydroxyacyl-ACPs. The sequence is that of 3-hydroxyacyl-[acyl-carrier-protein] dehydratase FabZ from Vibrio atlanticus (strain LGP32) (Vibrio splendidus (strain Mel32)).